The following is a 417-amino-acid chain: BSD domain-containing protein 1-B (417 aa).

The region spanning 153-205 (WLAYWDPEQRKAEISEPLVTSPSIRALFTKMVPAAVSHSEFWQRYFYKVHQLE) is the BSD domain. Disordered stretches follow at residues 215 to 234 (KQRANQSVHSEEPKWEEEEE), 262 to 292 (HVEDKSEKTAELNRDHTSVTSPSESSESISP), and 323 to 390 (AAET…DFDM). Residues 262 to 278 (HVEDKSEKTAELNRDHT) are compositionally biased toward basic and acidic residues. The span at 281 to 292 (TSPSESSESISP) shows a compositional bias: low complexity. Polar residues predominate over residues 332 to 343 (PVEQTGKSNAQM). Basic and acidic residues predominate over residues 345-356 (THREDPPSDLRV). A compositionally biased stretch (polar residues) spans 360–379 (NSDSGKSTPSNNGQKGSSTD). Residues 380–390 (VSEDWEKDFDM) show a composition bias toward acidic residues.

The chain is BSD domain-containing protein 1-B (bsdc1-b) from Xenopus laevis (African clawed frog).